The chain runs to 494 residues: Aspartyl/glutamyl-tRNA(Asn/Gln) amidotransferase subunit B (494 aa).

It belongs to the GatB/GatE family. GatB subfamily. In terms of assembly, heterotrimer of A, B and C subunits.

It carries out the reaction L-glutamyl-tRNA(Gln) + L-glutamine + ATP + H2O = L-glutaminyl-tRNA(Gln) + L-glutamate + ADP + phosphate + H(+). The catalysed reaction is L-aspartyl-tRNA(Asn) + L-glutamine + ATP + H2O = L-asparaginyl-tRNA(Asn) + L-glutamate + ADP + phosphate + 2 H(+). Allows the formation of correctly charged Asn-tRNA(Asn) or Gln-tRNA(Gln) through the transamidation of misacylated Asp-tRNA(Asn) or Glu-tRNA(Gln) in organisms which lack either or both of asparaginyl-tRNA or glutaminyl-tRNA synthetases. The reaction takes place in the presence of glutamine and ATP through an activated phospho-Asp-tRNA(Asn) or phospho-Glu-tRNA(Gln). This chain is Aspartyl/glutamyl-tRNA(Asn/Gln) amidotransferase subunit B, found in Protochlamydia amoebophila (strain UWE25).